The chain runs to 668 residues: Threonine--tRNA ligase (668 aa).

The region spanning 1–64 (MSQAISLTFP…TDGKIEIITR (64 aa)) is the TGS domain. The interval 245–553 (DHRKLGREMD…LIENFAGHMP (309 aa)) is catalytic. Residues C347, H398, and H530 each contribute to the Zn(2+) site.

This sequence belongs to the class-II aminoacyl-tRNA synthetase family. As to quaternary structure, homodimer. The cofactor is Zn(2+).

The protein resides in the cytoplasm. The catalysed reaction is tRNA(Thr) + L-threonine + ATP = L-threonyl-tRNA(Thr) + AMP + diphosphate + H(+). In terms of biological role, catalyzes the attachment of threonine to tRNA(Thr) in a two-step reaction: L-threonine is first activated by ATP to form Thr-AMP and then transferred to the acceptor end of tRNA(Thr). Also edits incorrectly charged L-seryl-tRNA(Thr). The sequence is that of Threonine--tRNA ligase from Rhizobium etli (strain CIAT 652).